Here is a 360-residue protein sequence, read N- to C-terminus: MKFYLVGGAVRDMLLGITPKDKDWVVVGATEDEMLANGFIKIAANFPVFIHPQTKQEYALARSEKKTASGYHGFEVNFSKYITLEDDLKRRDLTINSIAIDQNNKVIDPFNGQADLQNRILRHTSIAFIEDPLRVVRLARFKAQLSNFNFSIAQEMLALIKELVKTGELNHLTRERLHIEFVKALNNPKIFFTTLKELEALKIIFPNISCFLPLIPNKSFFENPIYKGSNINEKITLCLLKIPQQQLDDIRKEFLLTNKHYKLLKASIAISKILEDRSITAEEIFQLIKNANIIRDKNLFAESLNLYKKYLKICDTITPHRNYQLLQTTINTIKNASIDSLTIKTIPKDKLRNTLKQLKL.

Glycine 8 and arginine 11 together coordinate ATP. CTP-binding residues include glycine 8 and arginine 11. Residues aspartate 21 and aspartate 23 each coordinate Mg(2+). Positions 91, 137, and 140 each coordinate ATP. Arginine 91, arginine 137, and arginine 140 together coordinate CTP.

This sequence belongs to the tRNA nucleotidyltransferase/poly(A) polymerase family. Bacterial CCA-adding enzyme type 2 subfamily. Mg(2+) serves as cofactor.

It carries out the reaction a tRNA precursor + 2 CTP + ATP = a tRNA with a 3' CCA end + 3 diphosphate. The catalysed reaction is a tRNA with a 3' CCA end + 2 CTP + ATP = a tRNA with a 3' CCACCA end + 3 diphosphate. Its function is as follows. Catalyzes the addition and repair of the essential 3'-terminal CCA sequence in tRNAs without using a nucleic acid template. Adds these three nucleotides in the order of C, C, and A to the tRNA nucleotide-73, using CTP and ATP as substrates and producing inorganic pyrophosphate. tRNA 3'-terminal CCA addition is required both for tRNA processing and repair. Also involved in tRNA surveillance by mediating tandem CCA addition to generate a CCACCA at the 3' terminus of unstable tRNAs. While stable tRNAs receive only 3'-terminal CCA, unstable tRNAs are marked with CCACCA and rapidly degraded. This chain is CCA-adding enzyme, found in Francisella tularensis subsp. tularensis (strain FSC 198).